A 55-amino-acid chain; its full sequence is Neurotoxin B-II (55 aa).

A Hydroxyproline modification is found at P10. 4 disulfides stabilise this stretch: C12–C48, C16–C52, C23–C41, and C26–C37.

It belongs to the worm B-toxin family.

It is found in the secreted. In terms of biological role, this toxin increases the excitability of nerves by delaying the inactivation of the voltage-gated sodium channel (Nav). Only acts on some crustacean. Neurotoxin B-II is less abundant, but 15-fold more toxic than neurotoxin B-VI. The polypeptide is Neurotoxin B-II (Cerebratulus lacteus (Milky ribbon worm)).